Consider the following 364-residue polypeptide: Probable dual-specificity RNA methyltransferase RlmN (364 aa).

Catalysis depends on Glu107, which acts as the Proton acceptor. A Radical SAM core domain is found at His113–Asp346. The cysteines at positions 120 and 351 are disulfide-linked. The [4Fe-4S] cluster site is built by Cys127, Cys131, and Cys134. S-adenosyl-L-methionine-binding positions include Gly177–Glu178, Ser209, Ser232–His234, and Asn308. The S-methylcysteine intermediate role is filled by Cys351.

It belongs to the radical SAM superfamily. RlmN family. The cofactor is [4Fe-4S] cluster.

It localises to the cytoplasm. The catalysed reaction is adenosine(2503) in 23S rRNA + 2 reduced [2Fe-2S]-[ferredoxin] + 2 S-adenosyl-L-methionine = 2-methyladenosine(2503) in 23S rRNA + 5'-deoxyadenosine + L-methionine + 2 oxidized [2Fe-2S]-[ferredoxin] + S-adenosyl-L-homocysteine. The enzyme catalyses adenosine(37) in tRNA + 2 reduced [2Fe-2S]-[ferredoxin] + 2 S-adenosyl-L-methionine = 2-methyladenosine(37) in tRNA + 5'-deoxyadenosine + L-methionine + 2 oxidized [2Fe-2S]-[ferredoxin] + S-adenosyl-L-homocysteine. Its function is as follows. Specifically methylates position 2 of adenine 2503 in 23S rRNA and position 2 of adenine 37 in tRNAs. The polypeptide is Probable dual-specificity RNA methyltransferase RlmN (Geobacillus thermodenitrificans (strain NG80-2)).